A 451-amino-acid chain; its full sequence is Phosphoglucosamine mutase (451 aa).

The active-site Phosphoserine intermediate is Ser107. The Mg(2+) site is built by Ser107, Asp246, Asp248, and Asp250. Ser107 is subject to Phosphoserine.

It belongs to the phosphohexose mutase family. Mg(2+) serves as cofactor. In terms of processing, activated by phosphorylation.

The enzyme catalyses alpha-D-glucosamine 1-phosphate = D-glucosamine 6-phosphate. In terms of biological role, catalyzes the conversion of glucosamine-6-phosphate to glucosamine-1-phosphate. This Burkholderia lata (strain ATCC 17760 / DSM 23089 / LMG 22485 / NCIMB 9086 / R18194 / 383) protein is Phosphoglucosamine mutase.